The chain runs to 454 residues: tRNA modification GTPase MnmE (454 aa).

3 residues coordinate (6S)-5-formyl-5,6,7,8-tetrahydrofolate: arginine 23, glutamate 80, and lysine 120. The 162-residue stretch at 216-377 (GMKVVIAGRP…LRDHLKQSMG (162 aa)) folds into the TrmE-type G domain. Residue asparagine 226 participates in K(+) binding. Residues 226-231 (NAGKSS), 245-251 (TDIAGTT), 270-273 (DTAG), 335-338 (NKAD), and 358-360 (SAR) contribute to the GTP site. Position 230 (serine 230) interacts with Mg(2+). K(+) contacts are provided by threonine 245, isoleucine 247, and threonine 250. Threonine 251 provides a ligand contact to Mg(2+). Lysine 454 is a (6S)-5-formyl-5,6,7,8-tetrahydrofolate binding site.

Belongs to the TRAFAC class TrmE-Era-EngA-EngB-Septin-like GTPase superfamily. TrmE GTPase family. Homodimer. Heterotetramer of two MnmE and two MnmG subunits. It depends on K(+) as a cofactor.

The protein localises to the cytoplasm. Exhibits a very high intrinsic GTPase hydrolysis rate. Involved in the addition of a carboxymethylaminomethyl (cmnm) group at the wobble position (U34) of certain tRNAs, forming tRNA-cmnm(5)s(2)U34. In Yersinia pseudotuberculosis serotype O:3 (strain YPIII), this protein is tRNA modification GTPase MnmE.